The chain runs to 151 residues: Ribosomal RNA large subunit methyltransferase H (151 aa).

S-adenosyl-L-methionine-binding positions include Leu73, Gly100, and 119 to 124 (LSKMTM).

This sequence belongs to the RNA methyltransferase RlmH family. In terms of assembly, homodimer.

The protein resides in the cytoplasm. The catalysed reaction is pseudouridine(1915) in 23S rRNA + S-adenosyl-L-methionine = N(3)-methylpseudouridine(1915) in 23S rRNA + S-adenosyl-L-homocysteine + H(+). Functionally, specifically methylates the pseudouridine at position 1915 (m3Psi1915) in 23S rRNA. The protein is Ribosomal RNA large subunit methyltransferase H of Campylobacter concisus (strain 13826).